A 452-amino-acid chain; its full sequence is Enolase (452 aa).

Gln167 is a binding site for (2R)-2-phosphoglycerate. Glu209 (proton donor) is an active-site residue. Residues Asp250, Glu310, and Asp337 each contribute to the Mg(2+) site. Lys362, Arg391, Ser392, and Lys413 together coordinate (2R)-2-phosphoglycerate. Lys362 (proton acceptor) is an active-site residue.

This sequence belongs to the enolase family. Mg(2+) is required as a cofactor.

It is found in the cytoplasm. The protein resides in the secreted. The protein localises to the cell surface. It catalyses the reaction (2R)-2-phosphoglycerate = phosphoenolpyruvate + H2O. It functions in the pathway carbohydrate degradation; glycolysis; pyruvate from D-glyceraldehyde 3-phosphate: step 4/5. In terms of biological role, catalyzes the reversible conversion of 2-phosphoglycerate (2-PG) into phosphoenolpyruvate (PEP). It is essential for the degradation of carbohydrates via glycolysis. The protein is Enolase of Mycoplasmopsis synoviae (strain 53) (Mycoplasma synoviae).